Here is a 232-residue protein sequence, read N- to C-terminus: tRNA1(Val) (adenine(37)-N6)-methyltransferase (232 aa).

This sequence belongs to the methyltransferase superfamily. tRNA (adenine-N(6)-)-methyltransferase family.

It localises to the cytoplasm. The enzyme catalyses adenosine(37) in tRNA1(Val) + S-adenosyl-L-methionine = N(6)-methyladenosine(37) in tRNA1(Val) + S-adenosyl-L-homocysteine + H(+). Functionally, specifically methylates the adenine in position 37 of tRNA(1)(Val) (anticodon cmo5UAC). This is tRNA1(Val) (adenine(37)-N6)-methyltransferase from Haemophilus influenzae (strain ATCC 51907 / DSM 11121 / KW20 / Rd).